A 954-amino-acid polypeptide reads, in one-letter code: Glycine dehydrogenase (decarboxylating) (954 aa).

K704 carries the post-translational modification N6-(pyridoxal phosphate)lysine.

It belongs to the GcvP family. As to quaternary structure, the glycine cleavage system is composed of four proteins: P, T, L and H. Pyridoxal 5'-phosphate serves as cofactor.

The enzyme catalyses N(6)-[(R)-lipoyl]-L-lysyl-[glycine-cleavage complex H protein] + glycine + H(+) = N(6)-[(R)-S(8)-aminomethyldihydrolipoyl]-L-lysyl-[glycine-cleavage complex H protein] + CO2. In terms of biological role, the glycine cleavage system catalyzes the degradation of glycine. The P protein binds the alpha-amino group of glycine through its pyridoxal phosphate cofactor; CO(2) is released and the remaining methylamine moiety is then transferred to the lipoamide cofactor of the H protein. The sequence is that of Glycine dehydrogenase (decarboxylating) from Vibrio vulnificus (strain CMCP6).